Consider the following 377-residue polypeptide: Homoserine O-acetyltransferase (377 aa).

Residues 47 to 355 (NAILICHALT…DYGHDAFLLE (309 aa)) form the AB hydrolase-1 domain. Catalysis depends on Ser-153, which acts as the Nucleophile. Residue Arg-222 coordinates substrate. Residues Asp-316 and His-349 contribute to the active site. Position 350 (Asp-350) interacts with substrate.

This sequence belongs to the AB hydrolase superfamily. MetX family. As to quaternary structure, homodimer.

It is found in the cytoplasm. It catalyses the reaction L-homoserine + acetyl-CoA = O-acetyl-L-homoserine + CoA. Its pathway is amino-acid biosynthesis; L-methionine biosynthesis via de novo pathway; O-acetyl-L-homoserine from L-homoserine: step 1/1. Transfers an acetyl group from acetyl-CoA to L-homoserine, forming acetyl-L-homoserine. This chain is Homoserine O-acetyltransferase, found in Deferribacter desulfuricans (strain DSM 14783 / JCM 11476 / NBRC 101012 / SSM1).